The following is a 150-amino-acid chain: Cytochrome c-type biogenesis protein CcmE (150 aa).

Residues 1–7 (MTRKQKR) lie on the Cytoplasmic side of the membrane. Residues 8-28 (LAIIGGGVGFLTAAVLLVMFA) form a helical; Signal-anchor for type II membrane protein membrane-spanning segment. Topologically, residues 29 to 150 (FSQAVAYFYV…VTLGGEENIR (122 aa)) are periplasmic. Residues His123 and Tyr127 each contribute to the heme site.

The protein belongs to the CcmE/CycJ family.

Its subcellular location is the cell inner membrane. Heme chaperone required for the biogenesis of c-type cytochromes. Transiently binds heme delivered by CcmC and transfers the heme to apo-cytochromes in a process facilitated by CcmF and CcmH. The polypeptide is Cytochrome c-type biogenesis protein CcmE (Sinorhizobium medicae (strain WSM419) (Ensifer medicae)).